We begin with the raw amino-acid sequence, 213 residues long: uncharacterized protein (213 aa).

The segment covering M1–N11 has biased composition (basic and acidic residues). Disordered stretches follow at residues M1–N21 and L63–W98. The segment covering R12–N21 has biased composition (polar residues). A compositionally biased stretch (basic and acidic residues) spans L63–Q93.

This is an uncharacterized protein from Escherichia coli (strain K12).